The sequence spans 389 residues: Fructose-1,6-bisphosphate aldolase/phosphatase (389 aa).

Residue Asp-17 is the Proton acceptor; for FBP phosphatase activity of the active site. Mg(2+) contacts are provided by Asp-17, His-24, Asp-57, and Asp-58. His-24 is a beta-D-fructose 1,6-bisphosphate binding site. His-24 contributes to the dihydroxyacetone phosphate binding site. Tyr-95 is a binding site for beta-D-fructose 1,6-bisphosphate. Position 99 (Gln-99) interacts with Mg(2+). A beta-D-fructose 1,6-bisphosphate-binding site is contributed by Gly-108–Asn-109. Mg(2+) is bound at residue Asp-136. Lys-137 provides a ligand contact to beta-D-fructose 1,6-bisphosphate. Residue Lys-137 coordinates dihydroxyacetone phosphate. Tyr-233 functions as the Proton donor/acceptor; for FBP aldolase activity in the catalytic mechanism. Mg(2+)-binding residues include Lys-236, Asp-237, and Asp-238. The active-site Schiff-base intermediate with DHAP; for FBP aldolase activity is Lys-236. Residues Gln-246–Ser-247, Arg-270, Asp-291, and Tyr-352 each bind beta-D-fructose 1,6-bisphosphate. Dihydroxyacetone phosphate is bound by residues Arg-270 and Asp-291.

This sequence belongs to the FBP aldolase/phosphatase family. Homooctamer; dimer of tetramers. Requires Mg(2+) as cofactor.

It carries out the reaction beta-D-fructose 1,6-bisphosphate + H2O = beta-D-fructose 6-phosphate + phosphate. It catalyses the reaction beta-D-fructose 1,6-bisphosphate = D-glyceraldehyde 3-phosphate + dihydroxyacetone phosphate. Its pathway is carbohydrate biosynthesis; gluconeogenesis. Catalyzes two subsequent steps in gluconeogenesis: the aldol condensation of dihydroxyacetone phosphate (DHAP) and glyceraldehyde-3-phosphate (GA3P) to fructose-1,6-bisphosphate (FBP), and the dephosphorylation of FBP to fructose-6-phosphate (F6P). The polypeptide is Fructose-1,6-bisphosphate aldolase/phosphatase (Methanocaldococcus jannaschii (strain ATCC 43067 / DSM 2661 / JAL-1 / JCM 10045 / NBRC 100440) (Methanococcus jannaschii)).